Consider the following 361-residue polypeptide: Peptide chain release factor 1 (361 aa).

At Q236 the chain carries N5-methylglutamine. The segment at 286-306 is disordered; it reads AADSQRAEARKGQVGSGDRSE.

This sequence belongs to the prokaryotic/mitochondrial release factor family. Methylated by PrmC. Methylation increases the termination efficiency of RF1.

The protein localises to the cytoplasm. In terms of biological role, peptide chain release factor 1 directs the termination of translation in response to the peptide chain termination codons UAG and UAA. This chain is Peptide chain release factor 1, found in Magnetococcus marinus (strain ATCC BAA-1437 / JCM 17883 / MC-1).